The chain runs to 172 residues: Shikimate kinase (172 aa).

Residue 14-19 (GAGKST) participates in ATP binding. Residue Ser-18 participates in Mg(2+) binding. 3 residues coordinate substrate: Asp-36, Arg-60, and Gly-82. Arg-120 contributes to the ATP binding site. Residue Arg-139 coordinates substrate. Gln-156 contributes to the ATP binding site.

The protein belongs to the shikimate kinase family. In terms of assembly, monomer. Mg(2+) serves as cofactor.

It is found in the cytoplasm. The catalysed reaction is shikimate + ATP = 3-phosphoshikimate + ADP + H(+). The protein operates within metabolic intermediate biosynthesis; chorismate biosynthesis; chorismate from D-erythrose 4-phosphate and phosphoenolpyruvate: step 5/7. In terms of biological role, catalyzes the specific phosphorylation of the 3-hydroxyl group of shikimic acid using ATP as a cosubstrate. This is Shikimate kinase from Vibrio parahaemolyticus serotype O3:K6 (strain RIMD 2210633).